The following is a 184-amino-acid chain: MSSLISKTIKYDPAKDKLITLACGCFWGTEHMYRKYLNDRIVDCKVGYANGEESKKDSPSSVSYKRVCGGDTDFAEVLQVSYNPKVITLRELTDFFFRIHDPTTSNSQGPDKGTQYRSGLFAHSDADLKELAKIKEEWQPKWGNKIATVIEPIKNFYDAEEYHQLYLDKNPQGYACPTHYLREM.

S58 carries the phosphoserine modification.

Belongs to the MsrA Met sulfoxide reductase family.

It catalyses the reaction L-methionyl-[protein] + [thioredoxin]-disulfide + H2O = L-methionyl-(S)-S-oxide-[protein] + [thioredoxin]-dithiol. The catalysed reaction is [thioredoxin]-disulfide + L-methionine + H2O = L-methionine (S)-S-oxide + [thioredoxin]-dithiol. Its function is as follows. Has an important function as a repair enzyme for proteins that have been inactivated by oxidation. Catalyzes the reversible oxidation-reduction of methionine sulfoxide in proteins to methionine. Also able to reduce dimethyl sulfoxide (DMSO) as well, with DMS as the product. In Saccharomyces cerevisiae (strain ATCC 204508 / S288c) (Baker's yeast), this protein is Peptide methionine sulfoxide reductase (MXR1).